The chain runs to 131 residues: D-ribose pyranase (131 aa).

Catalysis depends on histidine 20, which acts as the Proton donor. Substrate contacts are provided by residues aspartate 28, histidine 98, and tyrosine 120–asparagine 122.

This sequence belongs to the RbsD / FucU family. RbsD subfamily. In terms of assembly, homodecamer.

It localises to the cytoplasm. The catalysed reaction is beta-D-ribopyranose = beta-D-ribofuranose. It participates in carbohydrate metabolism; D-ribose degradation; D-ribose 5-phosphate from beta-D-ribopyranose: step 1/2. In terms of biological role, catalyzes the interconversion of beta-pyran and beta-furan forms of D-ribose. The sequence is that of D-ribose pyranase from Clostridium perfringens (strain 13 / Type A).